Consider the following 99-residue polypeptide: Carboxysome shell vertex protein CcmL (99 aa).

The region spanning 1–83 is the BMV domain; the sequence is MKIARVCGTV…IDAAVVAIID (83 aa).

This sequence belongs to the CcmL/EutN family. CcmL subfamily. As to quaternary structure, homopentamer. May interact with CcmK2, this occurs at very high CcmK2 concentrations. Interacts with full-length CcmM.

Its subcellular location is the carboxysome. Its function is as follows. Probably forms vertices in the carboxysome, a polyhedral inclusion where RuBisCO (ribulose bisphosphate carboxylase, rbcL-rbcS) is sequestered. Has been modeled to induce curvature upon insertion into an otherwise flat hexagonal molecular layer of CcmK subunits. The polypeptide is Carboxysome shell vertex protein CcmL (Thermosynechococcus vestitus (strain NIES-2133 / IAM M-273 / BP-1)).